The primary structure comprises 97 residues: MNHNVIIVIALIIVVISMLAMLIRVVLGPSLADRVVALDAIGLQLMAVIALFSILLNIKYMIVVIMMIGILAFLGTAVFSKFMDKGKVIEHDQNHTD.

The next 3 helical transmembrane spans lie at 3–23 (HNVIIVIALIIVVISMLAMLI), 35–55 (VVALDAIGLQLMAVIALFSIL), and 60–80 (YMIVVIMMIGILAFLGTAVFS).

It belongs to the CPA3 antiporters (TC 2.A.63) subunit F family. As to quaternary structure, may form a heterooligomeric complex that consists of seven subunits: mnhA1, mnhB1, mnhC1, mnhD1, mnhE1, mnhF1 and mnhG1.

The protein localises to the cell membrane. Mnh complex is a Na(+)/H(+) antiporter involved in Na(+) excretion. In Staphylococcus aureus (strain Mu3 / ATCC 700698), this protein is Na(+)/H(+) antiporter subunit F1 (mnhF1).